Reading from the N-terminus, the 945-residue chain is Netrin receptor UNC5B (945 aa).

An N-terminal signal peptide occupies residues 1 to 26; it reads MGARSGARGALLLALLLCWDPRLSQA. The Extracellular segment spans residues 27–377; it reads GTDSGSEVLP…LEASGDAALY (351 aa). Positions 48–145 constitute an Ig-like domain; that stretch reads PYFLQEPQDA…AGTTKSRRAY (98 aa). 9 disulfides stabilise this stretch: Cys69-Cys130, Cys81-Cys128, Cys174-Cys225, Cys258-Cys295, Cys262-Cys299, Cys273-Cys285, Cys314-Cys348, Cys318-Cys353, and Cys326-Cys338. The 96-residue stretch at 147–242 folds into the Ig-like C2-type domain; the sequence is RIAYLRKNFD…KRRSTTATVI (96 aa). Asn222 is a glycosylation site (N-linked (GlcNAc...) asparagine). TSP type-1 domains lie at 246 to 300 and 302 to 354; these read NGGW…TICP and DGAW…GLCM. A glycan (N-linked (GlcNAc...) asparagine) is linked at Asn347. Residues 378–398 form a helical membrane-spanning segment; the sequence is AGLVVAIFVVVAILMAVGVVV. Residues 399–945 lie on the Cytoplasmic side of the membrane; it reads YRRNCRDFDT…LVAVATDGDC (547 aa). Cys403 is lipidated: S-palmitoyl cysteine. Residues 543–686 form the ZU5 domain; it reads SSVSGTFGCL…LGTYVFTGES (144 aa). At Tyr581 the chain carries Phosphotyrosine. The tract at residues 689–838 is UPA domain; it reads RSAVKRLQLA…AETPAGSLDT (150 aa). Residues 707–725 form an interaction with DCC region; the sequence is SLEYSLRVYCLEDTPVALK. The Death domain maps to 865-943; that stretch reads KICNSLDAPN…EMLVAVATDG (79 aa).

Belongs to the unc-5 family. In terms of assembly, interacts with the cytoplasmic part of DCC. Interacts with GNAI2 via its cytoplasmic part. Interacts (via death domain) with DAPK1 (via death domain). Interacts (via extracellular domain) with FLRT3 (via extracellular domain); the interaction is direct. Interacts (via extracellular domain) with FLRT2 and FLRT3 (via extracellular domain), but has higher affinity for FLRT3. Identified in a complex with FLRT3 and ADGRL3; does not interact with ADGRL3 by itself. Post-translationally, phosphorylated on cytoplasmic tyrosine residues. Proteolytically cleaved by caspases during apoptosis. The cleavage does not take place when the receptor is associated with netrin ligand. Its cleavage by caspases is required to induce apoptosis. In terms of processing, palmitoylation is required for pro-apoptotic activity, but not for location at lipid rafts. Highly expressed in brain. Also expressed at lower level in developing lung, cartilage, kidney and hematopoietic and immune tissues.

It is found in the cell membrane. The protein localises to the membrane raft. Its function is as follows. Receptor for netrin required for axon guidance. Mediates axon repulsion of neuronal growth cones in the developing nervous system upon ligand binding. Axon repulsion in growth cones may be caused by its association with DCC that may trigger signaling for repulsion. Functions as a netrin receptor that negatively regulates vascular branching during angiogenesis. Mediates retraction of tip cell filopodia on endothelial growth cones in response to netrin. It also acts as a dependence receptor required for apoptosis induction when not associated with netrin ligand. Mediates apoptosis by activating DAPK1. In the absence of NTN1, activates DAPK1 by reducing its autoinhibitory phosphorylation at Ser-308 thereby increasing its catalytic activity. The chain is Netrin receptor UNC5B (UNC5B) from Homo sapiens (Human).